Consider the following 763-residue polypeptide: Dual specificity tyrosine-phosphorylation-regulated kinase 1A (763 aa).

Position 14 is a phosphoserine (Ser14). The segment at 32-57 (GQMPHSHQYSDRRQPNISDQQVSALS) is disordered. Residues 46-57 (PNISDQQVSALS) show a composition bias toward polar residues. Residue Tyr111 is modified to Phosphotyrosine; by autocatalysis. The segment at 115 to 136 (KKRRHQQGQGDDSSHKKERKVY) is disordered. A Bipartite nuclear localization signal motif is present at residues 117–134 (RRHQQGQGDDSSHKKERK). Tyr140 bears the Phosphotyrosine; by autocatalysis mark. At Tyr145 the chain carries Phosphotyrosine. Phosphotyrosine; by autocatalysis is present on Tyr159. Residues 159–479 (YEIDSLIGKG…PYYALQHSFF (321 aa)) enclose the Protein kinase domain. 165 to 173 (IGKGSFGQV) contacts ATP. Phosphotyrosine; by autocatalysis is present on Tyr177. Lys188 is an ATP binding site. Position 219 is a phosphotyrosine; by autocatalysis (Tyr219). Residue 238 to 241 (FEML) participates in ATP binding. Asp287 (proton acceptor) is an active-site residue. Ser310 carries the post-translational modification Phosphoserine; by autocatalysis. Phosphotyrosine; by autocatalysis is present on residues Tyr319 and Tyr321. Position 402 is a phosphothreonine; by autocatalysis (Thr402). A disordered region spans residues 408–442 (TKDGKREYKPPGTRKLHNILGVETGGPGGRRAGES). A Phosphotyrosine; by autocatalysis modification is found at Tyr449. Positions 485 to 501 (EGTNTSNSVSTSPAMEQ) are enriched in polar residues. 3 disordered regions span residues 485–540 (EGTN…HSGG), 596–679 (NALH…GNQA), and 744–763 (DREE…VASS). Positions 502 to 525 (SQSSGTTSSTSSSSGGSSGTSNSG) are enriched in low complexity. Residues Ser529 and Ser538 each carry the phosphoserine modification. The histidine-rich domain (HRD) stretch occupies residues 595–625 (QNALHHHHGNSSHHHHHHHHHHHHHGQQALG). The segment covering 598 to 620 (LHHHHGNSSHHHHHHHHHHHHHG) has biased composition (basic residues). Positions 634–645 (NSPTNSSSTQDS) are enriched in polar residues. A compositionally biased stretch (low complexity) spans 654 to 672 (SMTSLSSSTTSSSTSSSST). Phosphoserine is present on residues Ser748 and Ser758. Positions 754–763 (CVQQSPVASS) are enriched in polar residues.

Belongs to the protein kinase superfamily. CMGC Ser/Thr protein kinase family. MNB/DYRK subfamily. As to quaternary structure, interacts with RAD54L2/ARIP4. Interacts with CRY2. Interacts with RANBP9. Interacts with WDR68. Interacts with SIRT1. (Microbial infection) Interacts with human adenovirus 5 E1A protein. Post-translationally, autophosphorylated on numerous tyrosine residues. Can also autophosphorylate on serine and threonine residues (in vitro). Ubiquitous. Highest levels in skeletal muscle, testis, fetal lung and fetal kidney.

The protein resides in the nucleus. The protein localises to the nucleus speckle. The catalysed reaction is L-seryl-[protein] + ATP = O-phospho-L-seryl-[protein] + ADP + H(+). It carries out the reaction L-threonyl-[protein] + ATP = O-phospho-L-threonyl-[protein] + ADP + H(+). The enzyme catalyses L-tyrosyl-[protein] + ATP = O-phospho-L-tyrosyl-[protein] + ADP + H(+). It catalyses the reaction [DNA-directed RNA polymerase] + ATP = phospho-[DNA-directed RNA polymerase] + ADP + H(+). Its activity is regulated as follows. Inhibited by RANBP9. Inhibited by harmine, leucettamine B and leucettine L41. Its function is as follows. Dual-specificity kinase which possesses both serine/threonine and tyrosine kinase activities. Exhibits a substrate preference for proline at position P+1 and arginine at position P-3. Plays an important role in double-strand breaks (DSBs) repair following DNA damage. Mechanistically, phosphorylates RNF169 and increases its ability to block accumulation of TP53BP1 at the DSB sites thereby promoting homologous recombination repair (HRR). Also acts as a positive regulator of transcription by acting as a CTD kinase that mediates phosphorylation of the CTD (C-terminal domain) of the large subunit of RNA polymerase II (RNAP II) POLR2A. May play a role in a signaling pathway regulating nuclear functions of cell proliferation. Modulates alternative splicing by phosphorylating the splice factor SRSF6. Has pro-survival function and negatively regulates the apoptotic process. Promotes cell survival upon genotoxic stress through phosphorylation of SIRT1. This in turn inhibits p53/TP53 activity and apoptosis. Phosphorylates SEPTIN4, SEPTIN5 and SF3B1 at 'Thr-434'. The sequence is that of Dual specificity tyrosine-phosphorylation-regulated kinase 1A from Homo sapiens (Human).